Reading from the N-terminus, the 1005-residue chain is uncharacterized protein (1005 aa).

The signal sequence occupies residues 1-24; sequence MKFQRKYWGLLSTLGVSSAVALSA. Residue cysteine 25 is the site of N-palmitoyl cysteine attachment. Cysteine 25 carries the S-diacylglycerol cysteine lipid modification. Disordered regions lie at residues 105-165 and 786-825; these read KKDK…EEKF and TQKIDQQNTASTTSDVTVKKADSSQDSSKSNTEEEKWDDV. 2 stretches are compositionally biased toward low complexity: residues 110–131 and 145–156; these read TSSQKTSTNSSCTTTSSGTSTS and QSSSNGQNNQQS. Positions 786–801 are enriched in polar residues; sequence TQKIDQQNTASTTSDV.

The protein localises to the cell membrane. This is an uncharacterized protein from Mycoplasma pneumoniae (strain ATCC 29342 / M129 / Subtype 1) (Mycoplasmoides pneumoniae).